The following is a 118-amino-acid chain: MNTYAFNRELRLLTPEHYQNVFQQAHRAGSPHFTIIARNNKLSHPRLGLAVPKKQIKTAVGRNRFKRLARESFRNSQHQLPNKDFVVIAKKSAQDLSNEEIFKLFDKLWQRLSRPSRG.

The protein belongs to the RnpA family. Consists of a catalytic RNA component (M1 or rnpB) and a protein subunit.

It catalyses the reaction Endonucleolytic cleavage of RNA, removing 5'-extranucleotides from tRNA precursor.. Its function is as follows. RNaseP catalyzes the removal of the 5'-leader sequence from pre-tRNA to produce the mature 5'-terminus. It can also cleave other RNA substrates such as 4.5S RNA. The protein component plays an auxiliary but essential role in vivo by binding to the 5'-leader sequence and broadening the substrate specificity of the ribozyme. This Vibrio parahaemolyticus serotype O3:K6 (strain RIMD 2210633) protein is Ribonuclease P protein component.